Consider the following 332-residue polypeptide: NAD-dependent protein deacetylase hst2 (332 aa).

Residues 7-269 (KHVDSSKHLE…RALCKLLGWS (263 aa)) form the Deacetylase sirtuin-type domain. NAD(+)-binding positions include 35–55 (GAGI…TGIY) and 118–121 (QNID). Histidine 138 (proton acceptor) is an active-site residue. Zn(2+) is bound by residues cysteine 146, cysteine 149, cysteine 170, and cysteine 173. NAD(+) is bound by residues 210–212 (GTS), 235–237 (NRE), and cysteine 255.

It belongs to the sirtuin family. Class I subfamily. Zn(2+) is required as a cofactor.

The protein localises to the cytoplasm. It localises to the nucleus. It carries out the reaction N(6)-acetyl-L-lysyl-[protein] + NAD(+) + H2O = 2''-O-acetyl-ADP-D-ribose + nicotinamide + L-lysyl-[protein]. In terms of biological role, NAD-dependent histone deacetylase, which could function in telomeric silencing, cell cycle progression and chromosome stability. The chain is NAD-dependent protein deacetylase hst2 (hst2) from Schizosaccharomyces pombe (strain 972 / ATCC 24843) (Fission yeast).